A 230-amino-acid chain; its full sequence is MSLPADLLLGAISSLLRNPPTSDAASPSADQPAVSSSRSDSRLVSAPLPAAPPAPTAIARNPRVSIHLPFQFLWYDITGTESSYTSLSIASRPEVVTVARPYRHARLTSLEAFVQPTASSATYPQTVDLCWTIDSVTPARSEILSVFGAQRIAWGSVHFSAPILLPAELSSLNPTIKDSVTYTDCPRLTCGFYRNDACVALGSSAPICGSILIRGVIECSAPINRPTPSS.

Positions Pro-19–Leu-48 are enriched in low complexity. Residues Pro-19–Ala-54 form a disordered region.

Belongs to the tymoviruses capsid protein family.

Its subcellular location is the virion. Its function is as follows. Self-assembles to form a T=3 icosahedral capsid composed of 180 copies of the capsid protein. The capsid encapsulates the single-stranded RNA genome. This is Capsid protein from Grapevine fleck virus (isolate Italy/MT48) (GFkV).